We begin with the raw amino-acid sequence, 164 residues long: Thiol peroxidase (164 aa).

Residues 16–162 enclose the Thioredoxin domain; the sequence is LQVGEIAHDF…YDAAIEAVKV (147 aa). Cys58 functions as the Cysteine sulfenic acid (-SOH) intermediate in the catalytic mechanism. A disulfide bond links Cys58 and Cys92.

This sequence belongs to the peroxiredoxin family. Tpx subfamily. Homodimer.

The catalysed reaction is a hydroperoxide + [thioredoxin]-dithiol = an alcohol + [thioredoxin]-disulfide + H2O. Its function is as follows. Thiol-specific peroxidase that catalyzes the reduction of hydrogen peroxide and organic hydroperoxides to water and alcohols, respectively. Plays a role in cell protection against oxidative stress by detoxifying peroxides. The sequence is that of Thiol peroxidase from Streptococcus parasanguinis.